A 394-amino-acid polypeptide reads, in one-letter code: Actin-related protein 2 (394 aa).

Met-1 carries the post-translational modification N-acetylmethionine. Residues 160–162 and 214–218 each bind ATP; these read GDG and RMIKE. Lys-299 is subject to N6-acetyllysine. Position 305-310 (305-310) interacts with ATP; sequence GGSTMY. The residue at position 322 (Lys-322) is an N6-acetyllysine.

This sequence belongs to the actin family. ARP2 subfamily. As to quaternary structure, component of the Arp2/3 complex composed of ACTR2/ARP2, ACTR3/ARP3, ARPC1B/p41-ARC, ARPC2/p34-ARC, ARPC3/p21-ARC, ARPC4/p20-ARC and ARPC5/p16-ARC.

Its subcellular location is the cytoplasm. The protein resides in the cytoskeleton. It localises to the cell projection. It is found in the nucleus. ATP-binding component of the Arp2/3 complex, a multiprotein complex that mediates actin polymerization upon stimulation by nucleation-promoting factor (NPF). The Arp2/3 complex mediates the formation of branched actin networks in the cytoplasm, providing the force for cell motility. Seems to contact the pointed end of the daughter actin filament. In addition to its role in the cytoplasmic cytoskeleton, the Arp2/3 complex also promotes actin polymerization in the nucleus, thereby regulating gene transcription and repair of damaged DNA. The Arp2/3 complex promotes homologous recombination (HR) repair in response to DNA damage by promoting nuclear actin polymerization, leading to drive motility of double-strand breaks (DSBs). The chain is Actin-related protein 2 (Actr2) from Rattus norvegicus (Rat).